A 286-amino-acid polypeptide reads, in one-letter code: Phosphatidylglycerol--prolipoprotein diacylglyceryl transferase (286 aa).

4 consecutive transmembrane segments (helical) span residues 25–45, 65–85, 103–123, and 127–147; these read WYAL…RMLL, FILW…VLFY, GGMS…LFGW, and VPIL…LFLG. Arginine 148 contacts a 1,2-diacyl-sn-glycero-3-phospho-(1'-sn-glycerol). A run of 3 helical transmembrane segments spans residues 188-208, 212-232, and 248-268; these read AGLE…AGAL, GLII…GEFF, and MGML…ITTW.

Belongs to the Lgt family.

It is found in the cell inner membrane. It catalyses the reaction L-cysteinyl-[prolipoprotein] + a 1,2-diacyl-sn-glycero-3-phospho-(1'-sn-glycerol) = an S-1,2-diacyl-sn-glyceryl-L-cysteinyl-[prolipoprotein] + sn-glycerol 1-phosphate + H(+). It functions in the pathway protein modification; lipoprotein biosynthesis (diacylglyceryl transfer). Its function is as follows. Catalyzes the transfer of the diacylglyceryl group from phosphatidylglycerol to the sulfhydryl group of the N-terminal cysteine of a prolipoprotein, the first step in the formation of mature lipoproteins. In Rhodopseudomonas palustris (strain ATCC BAA-98 / CGA009), this protein is Phosphatidylglycerol--prolipoprotein diacylglyceryl transferase.